The chain runs to 412 residues: MSQGTLYINRSPRNYASEALISYFKLDVKIVDLEQSSEFASLFPLKQAPAFLGPKGLKLTEALAIQFYLANQVADEKERARLLGSDVIEKSQILRWASLANSDVMSNIARPFLSFKGLIPYNKKDVDACFVKIDNLAAVFDARLRDYTFVATENISLGDLHAAGSWAFGLATILGPEWRAKHPHLMRWFNTVAASPIVKTPFAEVKLAEKALTYTPPKKQKAEKPKAEKSKAEKKKDEAKPADDAAPAKKPKHPLEALGKSTFVLDDWKRKYSNDDTRPVALPWFWEHYNPEEYSIWKVGYKYNDELTLTFMSNNLVGGFFNRLSASTKYMFGCLVVYGENNNNGIVGAVMVRGQDFAPAFDVAPDWESYEYTKLDPTKEEDKEFVNNMWAWDKPVVVNGEDKEIVDGKVLK.

Ser2 carries the N-acetylserine modification. One can recognise a GST N-terminal domain in the interval 2-77 (SQGTLYINRS…YLANQVADEK (76 aa)). Positions 86-217 (DVIEKSQILR…AEKALTYTPP (132 aa)) constitute a GST C-terminal domain. Residues 216-253 (PPKKQKAEKPKAEKSKAEKKKDEAKPADDAAPAKKPKH) form a disordered region. Residues 220–247 (QKAEKPKAEKSKAEKKKDEAKPADDAAP) show a composition bias toward basic and acidic residues. The EF-1-gamma C-terminal domain occupies 251–412 (PKHPLEALGK…KEIVDGKVLK (162 aa)).

As to quaternary structure, the eukaryotic elongation factor 1 complex (eEF1) is probably a heterohexamer. Two trimeric complexes, each composed of eEF1A (TEF1 or TEF2), eEF1Balpha (EFB1) and eEF1Bgamma (CAM1 or TEF4), are probably dimerized via the eF1Bgamma subunits. The eEF1B subcomplex with the GEF activity is formed of eEF1Balpha and eEF1Bgamma. TEF4 interacts with EFB1.

It localises to the cytoplasm. It participates in protein biosynthesis; polypeptide chain elongation. In terms of biological role, subunit of the eukaryotic elongation factor 1 complex (eEF1). Probably plays a role in anchoring the complex to other cellular components. This chain is Elongation factor 1-gamma 2 (TEF4), found in Saccharomyces cerevisiae (strain ATCC 204508 / S288c) (Baker's yeast).